Here is a 243-residue protein sequence, read N- to C-terminus: MTGIAAASFFSNTCRFGGCGLHFPTLADLIEHIEDNHIDTDPRVLEKQELQQPTYVALSYINRFMTDAARREQESLKKKIQPKLSLTLSSSVSRGNVSTPPRHSSGSLTPPVTPPITPSSSFRSSTPTGSEYDEEEVDYEESDSDESWTTESAISSEAILSSMCMNGGEEKPFACPVPGCKKRYKNVNGIKYHAKNGHRTQIRVRKPFKCRCGKSYKTAQGLRHHTINFHPPVSAEMIRKMQQ.

The C2H2-type 1 zinc finger occupies 12-37 (NTCRFGGCGLHFPTLADLIEHIEDNH). A required for interaction with NR2C2 region spans residues 39–79 (DTDPRVLEKQELQQPTYVALSYINRFMTDAARREQESLKKK). Residues 89–108 (SSSVSRGNVSTPPRHSSGSL) show a composition bias toward polar residues. A disordered region spans residues 89–151 (SSSVSRGNVS…SDSDESWTTE (63 aa)). A phosphothreonine mark is found at Thr-109 and Thr-113. The segment covering 118-130 (PSSSFRSSTPTGS) has biased composition (low complexity). Positions 131–148 (EYDEEEVDYEESDSDESW) are enriched in acidic residues. Residues 173 to 198 (FACPVPGCKKRYKNVNGIKYHAKNGH) form a C2H2-type 2 zinc finger. The C2H2-type 3; degenerate zinc finger occupies 208 to 230 (FKCRCGKSYKTAQGLRHHTINFH).

As to quaternary structure, interacts with NR2C2 (via ligand-binding region). As to expression, expressed in range of tissues with highest expression levels in testis, liver, muscle and fat and lowest levels in kidney. Detected in liver and white adipose tissue (at protein level).

The protein localises to the nucleus. In terms of biological role, acts as a transcriptional corepressor of orphan nuclear receptor NR2C2. Inhibits expression of the gluconeogenesis enzyme PCK2 through inhibition of NR2C2 activity. Also involved in transcriptional activation of NAMPT by promoting expression of PPARA and PPARD. Plays a role in lipid metabolism by suppressing lipogenesis, increasing lipolysis and decreasing lipid accumulation in adipose tissue. Plays a role in glucose homeostasis by improving glucose metabolism and insulin sensitivity. This chain is Juxtaposed with another zinc finger protein 1 (Jazf1), found in Mus musculus (Mouse).